The chain runs to 440 residues: KH domain-containing protein 3 (440 aa).

The interval 1–39 (MASLKRFQTLVPLDHKQGTLFEIIGEPKLPKWFHVECLE) is involved in RNA binding. Residues 40-118 (DPKRLYVEPR…CRMKLMEIEA (79 aa)) form the KH; atypical domain. A disordered region spans residues 132-201 (KAATQPAPVK…EVREAATEQA (70 aa)). A Phosphoserine; by ATR modification is found at Ser151. A phosphothreonine mark is found at Thr274 and Thr286. Residues 341 to 440 (VREAATQLSP…RDAWESFIIL (100 aa)) form a required for interaction with NUMA1 and regulation of apoptosis in response to DNA damage region. Position 349 is a phosphoserine (Ser349).

The protein belongs to the KHDC1 family. Component of the subcortical maternal complex (SCMC), at least composed of NLRP5, KHDC3, OOEP, and TLE6. Within the complex, interacts with NLRP5, OOEP and TLE6. The SCMC may facilitate translocation of its components between the nuclear and cytoplasmic compartments. Forms a scaffold complex with OOEP/FLOPED, and interacts with BLM and TRIM25 at DNA replication forks. Interacts with PARP1; the interaction is increased following the formation of DNA double-strand breaks. Interacts (via C-terminus) with NUMA1. Post-translationally, phosphorylation at Ser-151 is required to promote stalled fork restart. As to expression, detected in ovary, but not in testis or somatic tissues. In the ovary, expressed in growing oocytes.

Its subcellular location is the cytoplasm. The protein localises to the cell cortex. It is found in the nucleus. It localises to the mitochondrion. The protein resides in the cytoskeleton. Its subcellular location is the microtubule organizing center. The protein localises to the centrosome. It is found in the chromosome. Its function is as follows. Component of the subcortical maternal complex (SCMC), a multiprotein complex that plays a key role in early embryonic development. The SCMC complex is a structural constituent of cytoplasmic lattices, which consist in fibrous structures found in the cytoplasm of oocytes and preimplantation embryos. They are required to store maternal proteins critical for embryonic development, such as proteins that control epigenetic reprogramming of the preimplantation embryo, and prevent their degradation or activation. KHDC3 ensures proper spindle assembly by regulating the localization of AURKA via RHOA signaling and of PLK1 via a RHOA-independent process. Required for the localization of MAD2L1 to kinetochores to enable spindle assembly checkpoint function. As part of the OOEP-KHDC3 scaffold, recruits BLM and TRIM25 to DNA replication forks, thereby promoting the ubiquitination of BLM by TRIM25, enhancing BLM retainment at replication forks and therefore promoting stalled replication fork restart. Regulates homologous recombination-mediated DNA repair via recruitment of RAD51 to sites of DNA double-strand breaks, and sustainment of PARP1 activity, which in turn modulates downstream ATM or ATR activation. Activation of ATM or ATR in response to DNA double-strand breaks may be cell-type specific. Its role in DNA double-strand break repair is independent of its role in restarting stalled replication forks. Promotes neural stem cell neurogenesis and neuronal differentiation in the hippocampus. May regulate normal development of learning, memory and anxiety. Capable of binding RNA. The sequence is that of KH domain-containing protein 3 from Mus musculus (Mouse).